A 216-amino-acid polypeptide reads, in one-letter code: Adenylate kinase (216 aa).

10–15 (GAGKGT) lines the ATP pocket. The NMP stretch occupies residues 30–59 (STGDMLRAAVKAGTKLGQQVQGIMAAGKLV). AMP contacts are provided by residues T31, R36, 57-59 (KLV), 85-88 (GFPR), and Q92. The interval 122-159 (GRRVHMPSGRIYHLKFNPPKITDKDDMTGESLTLRKDD) is LID. Residues R123 and 132-133 (IY) contribute to the ATP site. Positions 156 and 167 each coordinate AMP. R200 is an ATP binding site.

Belongs to the adenylate kinase family. As to quaternary structure, monomer.

It localises to the cytoplasm. The catalysed reaction is AMP + ATP = 2 ADP. It participates in purine metabolism; AMP biosynthesis via salvage pathway; AMP from ADP: step 1/1. Functionally, catalyzes the reversible transfer of the terminal phosphate group between ATP and AMP. Plays an important role in cellular energy homeostasis and in adenine nucleotide metabolism. The chain is Adenylate kinase from Hamiltonella defensa subsp. Acyrthosiphon pisum (strain 5AT).